The sequence spans 301 residues: Eukaryotic translation initiation factor 3 subunit F (301 aa).

An MPN domain is found at 32 to 169 (VHVHPVALFS…IKSYISSPLG (138 aa)).

Belongs to the eIF-3 subunit F family. As to quaternary structure, component of the eukaryotic translation initiation factor 3 (eIF-3) complex.

It localises to the cytoplasm. Component of the eukaryotic translation initiation factor 3 (eIF-3) complex, which is involved in protein synthesis of a specialized repertoire of mRNAs and, together with other initiation factors, stimulates binding of mRNA and methionyl-tRNAi to the 40S ribosome. The eIF-3 complex specifically targets and initiates translation of a subset of mRNAs involved in cell proliferation. The polypeptide is Eukaryotic translation initiation factor 3 subunit F (Mycosarcoma maydis (Corn smut fungus)).